Reading from the N-terminus, the 582-residue chain is Aspartate--tRNA(Asp/Asn) ligase (582 aa).

Glu-177 is a binding site for L-aspartate. Residues 201–204 form an aspartate region; sequence QLFK. An L-aspartate-binding site is contributed by Arg-223. ATP contacts are provided by residues 223–225 and Gln-232; that span reads RDE. His-447 provides a ligand contact to L-aspartate. Glu-481 contributes to the ATP binding site. Arg-488 contributes to the L-aspartate binding site. Residue 533-536 participates in ATP binding; it reads GLDR.

It belongs to the class-II aminoacyl-tRNA synthetase family. Type 1 subfamily. As to quaternary structure, homodimer.

The protein resides in the cytoplasm. The enzyme catalyses tRNA(Asx) + L-aspartate + ATP = L-aspartyl-tRNA(Asx) + AMP + diphosphate. In terms of biological role, aspartyl-tRNA synthetase with relaxed tRNA specificity since it is able to aspartylate not only its cognate tRNA(Asp) but also tRNA(Asn). Reaction proceeds in two steps: L-aspartate is first activated by ATP to form Asp-AMP and then transferred to the acceptor end of tRNA(Asp/Asn). This chain is Aspartate--tRNA(Asp/Asn) ligase, found in Chlamydia trachomatis serovar L2 (strain ATCC VR-902B / DSM 19102 / 434/Bu).